Reading from the N-terminus, the 413-residue chain is Gamma-glutamyl phosphate reductase (413 aa).

Belongs to the gamma-glutamyl phosphate reductase family.

It localises to the cytoplasm. It carries out the reaction L-glutamate 5-semialdehyde + phosphate + NADP(+) = L-glutamyl 5-phosphate + NADPH + H(+). It functions in the pathway amino-acid biosynthesis; L-proline biosynthesis; L-glutamate 5-semialdehyde from L-glutamate: step 2/2. Its function is as follows. Catalyzes the NADPH-dependent reduction of L-glutamate 5-phosphate into L-glutamate 5-semialdehyde and phosphate. The product spontaneously undergoes cyclization to form 1-pyrroline-5-carboxylate. In Thermus thermophilus (strain ATCC BAA-163 / DSM 7039 / HB27), this protein is Gamma-glutamyl phosphate reductase.